Consider the following 348-residue polypeptide: Dihydroorotase (348 aa).

2 residues coordinate Zn(2+): His17 and His19. Residues 19–21 and Asn45 each bind substrate; that span reads HLR. 3 residues coordinate Zn(2+): Lys103, His140, and His178. Lys103 is subject to N6-carboxylysine. His140 contributes to the substrate binding site. A substrate-binding site is contributed by Leu223. Asp251 contributes to the Zn(2+) binding site. Asp251 is a catalytic residue. Substrate contacts are provided by His255 and Ala267.

This sequence belongs to the metallo-dependent hydrolases superfamily. DHOase family. Class II DHOase subfamily. As to quaternary structure, homodimer. Zn(2+) is required as a cofactor.

It carries out the reaction (S)-dihydroorotate + H2O = N-carbamoyl-L-aspartate + H(+). The protein operates within pyrimidine metabolism; UMP biosynthesis via de novo pathway; (S)-dihydroorotate from bicarbonate: step 3/3. Functionally, catalyzes the reversible cyclization of carbamoyl aspartate to dihydroorotate. This chain is Dihydroorotase, found in Salmonella arizonae (strain ATCC BAA-731 / CDC346-86 / RSK2980).